The primary structure comprises 398 residues: tRNA-specific 2-thiouridylase MnmA (398 aa).

ATP is bound by residues 20–27 (AMSGGVDS) and leucine 46. Cysteine 114 (nucleophile) is an active-site residue. A disulfide bond links cysteine 114 and cysteine 210. Residue glycine 138 coordinates ATP. The interaction with tRNA stretch occupies residues 160-162 (RDQ). The active-site Cysteine persulfide intermediate is the cysteine 210.

Belongs to the MnmA/TRMU family.

It localises to the cytoplasm. It catalyses the reaction S-sulfanyl-L-cysteinyl-[protein] + uridine(34) in tRNA + AH2 + ATP = 2-thiouridine(34) in tRNA + L-cysteinyl-[protein] + A + AMP + diphosphate + H(+). In terms of biological role, catalyzes the 2-thiolation of uridine at the wobble position (U34) of tRNA, leading to the formation of s(2)U34. The protein is tRNA-specific 2-thiouridylase MnmA of Brucella suis (strain ATCC 23445 / NCTC 10510).